A 511-amino-acid chain; its full sequence is Apolipoprotein N-acyltransferase (511 aa).

The next 6 membrane-spanning stretches (helical) occupy residues 7–29 (PGWP…LAPF), 58–78 (GWWY…VSIH), 90–110 (LLML…AWLW), 125–145 (LAFA…LTGF), 163–183 (VPVG…ALLV), and 192–212 (GASL…GLYL). Residues 230-470 (IQGNIAQELK…QGILRGEVIP (241 aa)) form the CN hydrolase domain. E269 acts as the Proton acceptor in catalysis. The active site involves K330. The active-site Nucleophile is the C382. The helical transmembrane segment at 482–502 (VWPLAGLAGVLLLWALLGRQL) threads the bilayer.

This sequence belongs to the CN hydrolase family. Apolipoprotein N-acyltransferase subfamily.

It localises to the cell inner membrane. It catalyses the reaction N-terminal S-1,2-diacyl-sn-glyceryl-L-cysteinyl-[lipoprotein] + a glycerophospholipid = N-acyl-S-1,2-diacyl-sn-glyceryl-L-cysteinyl-[lipoprotein] + a 2-acyl-sn-glycero-3-phospholipid + H(+). Its pathway is protein modification; lipoprotein biosynthesis (N-acyl transfer). In terms of biological role, catalyzes the phospholipid dependent N-acylation of the N-terminal cysteine of apolipoprotein, the last step in lipoprotein maturation. The polypeptide is Apolipoprotein N-acyltransferase (Pseudomonas aeruginosa (strain LESB58)).